A 344-amino-acid polypeptide reads, in one-letter code: 4-dimethylallyltryptophan N-methyltransferase easF (344 aa).

It belongs to the methyltransferase superfamily. Homodimer.

It catalyses the reaction 4-(3-methylbut-2-enyl)-L-tryptophan + S-adenosyl-L-methionine = 4-(3-methylbut-2-enyl)-L-abrine + S-adenosyl-L-homocysteine + H(+). Its pathway is alkaloid biosynthesis; ergot alkaloid biosynthesis. In terms of biological role, 4-dimethylallyltryptophan N-methyltransferase; part of the gene cluster that mediates the biosynthesis of fungal ergot alkaloid. DmaW catalyzes the first step of ergot alkaloid biosynthesis by condensing dimethylallyl diphosphate (DMAP) and tryptophan to form 4-dimethylallyl-L-tryptophan. The second step is catalyzed by the methyltransferase easF that methylates 4-dimethylallyl-L-tryptophan in the presence of S-adenosyl-L-methionine, resulting in the formation of 4-dimethylallyl-L-abrine. The catalase easC and the FAD-dependent oxidoreductase easE then transform 4-dimethylallyl-L-abrine to chanoclavine-I which is further oxidized by easD in the presence of NAD(+), resulting in the formation of chanoclavine-I aldehyde. Agroclavine dehydrogenase easG then mediates the conversion of chanoclavine-I aldehyde to agroclavine via a non-enzymatic adduct reaction: the substrate is an iminium intermediate that is formed spontaneously from chanoclavine-I aldehyde in the presence of glutathione. The presence of easA is not required to complete this reaction. Further conversion of agroclavine to paspalic acid is a two-step process involving oxidation of agroclavine to elymoclavine and of elymoclavine to paspalic acid, the second step being performed by the elymoclavine oxidase cloA. Paspalic acid is then further converted to D-lysergic acid. Ergopeptines are assembled from D-lysergic acid and three different amino acids by the D-lysergyl-peptide-synthetases composed each of a monomudular and a trimodular nonribosomal peptide synthetase subunit. LpsB and lpsC encode the monomodular subunits responsible for D-lysergic acid activation and incorporation into the ergopeptine backbone. LpsA1 and A2 subunits encode the trimodular nonribosomal peptide synthetase assembling the tripeptide portion of ergopeptines. LpsA1 is responsible for formation of the major ergopeptine, ergotamine, and lpsA2 for alpha-ergocryptine, the minor ergopeptine of the total alkaloid mixture elaborated by C.purpurea. D-lysergyl-tripeptides are assembled by the nonribosomal peptide synthetases and released as N-(D-lysergyl-aminoacyl)-lactams. Cyclolization of the D-lysergyl-tripeptides is performed by the Fe(2+)/2-ketoglutarate-dependent dioxygenase easH which introduces a hydroxyl group into N-(D-lysergyl-aminoacyl)-lactam at alpha-C of the aminoacyl residue followed by spontaneous condensation with the terminal lactam carbonyl group. In Claviceps purpurea (strain 20.1) (Ergot fungus), this protein is 4-dimethylallyltryptophan N-methyltransferase easF.